We begin with the raw amino-acid sequence, 245 residues long: tRNA pseudouridine synthase A (245 aa).

D52 acts as the Nucleophile in catalysis. Y111 serves as a coordination point for substrate.

Belongs to the tRNA pseudouridine synthase TruA family. In terms of assembly, homodimer.

It catalyses the reaction uridine(38/39/40) in tRNA = pseudouridine(38/39/40) in tRNA. In terms of biological role, formation of pseudouridine at positions 38, 39 and 40 in the anticodon stem and loop of transfer RNAs. The protein is tRNA pseudouridine synthase A of Ehrlichia canis (strain Jake).